A 231-amino-acid chain; its full sequence is Ion-translocating oxidoreductase complex subunit E (231 aa).

The next 6 helical transmembrane spans lie at G18–A38, L39–V59, I69–A89, G93–G113, S127–A147, and T182–L202.

Belongs to the NqrDE/RnfAE family. The complex is composed of six subunits: RnfA, RnfB, RnfC, RnfD, RnfE and RnfG.

The protein resides in the cell inner membrane. In terms of biological role, part of a membrane-bound complex that couples electron transfer with translocation of ions across the membrane. This Shewanella piezotolerans (strain WP3 / JCM 13877) protein is Ion-translocating oxidoreductase complex subunit E.